Reading from the N-terminus, the 374-residue chain is Trichodiene synthase (374 aa).

The Mg(2+) site is built by Asp100, Glu164, Asn225, Ser229, Glu233, Asp239, and Ile241. The tract at residues 100 to 104 is aspartate-rich domain; sequence DDSKD.

It belongs to the trichodiene synthase family. The cofactor is Mg(2+). Mn(2+) is required as a cofactor.

The catalysed reaction is (2E,6E)-farnesyl diphosphate = trichodiene + diphosphate. It participates in sesquiterpene biosynthesis; trichothecene biosynthesis. With respect to regulation, benzyl triethylammonium cation (BTAC) acts as a competitive inhibitor of trichodiene synthase reaction in the presence of pyrophosphate (PPi). Functionally, trichodiene synthase; part of the core gene cluster that mediates the biosynthesis of trichothecenes, a very large family of chemically related bicyclic sesquiterpene compounds acting as mycotoxins, including T2-toxin. The biosynthesis of trichothecenes begins with the cyclization of farnesyl diphosphate to trichodiene and is catalyzed by the trichodiene synthase TRI5. Trichodiene undergoes a series of oxygenations catalyzed by the cytochrome P450 monooxygenase TRI4. TRI4 controls the addition of four oxygens at C-2, C-3, C-11, and the C-12, C-13-epoxide to form the intermediate isotrichotriol. Isotrichotriol then undergoes a non-enzymatic isomerization and cyclization to form isotrichodermol. During this process, the oxygen at the C-2 position becomes the pyran ring oxygen and the hydroxyl group at C-11 is lost. More complex type A trichothecenes are built by modifying isotrichodermol through a series of paired hydroxylation and acetylation or acylation steps. Isotrichodermol is converted to isotrichodermin by the acetyltransferase TRI101. TRI101 encodes a C-3 transacetylase that acts as a self-protection or resistance factor during biosynthesis and that the presence of a free C-3 hydroxyl group is a key component of Fusarium trichothecene phytotoxicity. A second hydroxyl group is added to C-15 by the trichothecene C-15 hydroxylase TRI11, producing 15-decalonectrin, which is then acetylated by TRI3, producing calonectrin. A third hydroxyl group is added at C-4 by the cytochrome P450 monooxygenase TRI13, converting calonectrin to 3,15-diacetoxyspirpenol, which is subsequently acetylated by the acetyltransferase TRI7. A fourth hydroxyl group is added to C-8 by the cytochrome P450 monooxygenase TRI1, followed by the addition of an isovaleryl moiety by TRI16. Finally, the acetyl group is removed from the C-3 position by the trichothecene C-3 esterase TRI8 to produce T-2 toxin. This chain is Trichodiene synthase, found in Fusarium sporotrichioides.